An 89-amino-acid polypeptide reads, in one-letter code: VIGGAECDINEHPSLALIYSTSMRFHCAGTLLNQEWVSFTMWDKDIMLIRTLCAGVLEGGKDTCLAHPCAQPLLPAFYTKVFDYIPWIK.

Positions V1–K89 constitute a Peptidase S1 domain. D45 functions as the Charge relay system in the catalytic mechanism. Residues C64 and C69 are joined by a disulfide bond.

This sequence belongs to the peptidase S1 family. Snake venom subfamily. Post-translationally, glycosylated. In terms of tissue distribution, expressed by the venom gland.

The protein resides in the secreted. Its activity is regulated as follows. Inhibited by PMSF. Not inhibited by benzamidine. Functionally, snake venom serine protease that cleaves fibrinogen alpha and beta chains (FGA and FGB), but not gamma chains. Exhibits fibrinolytic and kininogenolytic. Preferentially cleaves after Arg and Lys residues. This is Snake venom serine protease rhinocerase from Bitis rhinoceros (West African gaboon viper).